Reading from the N-terminus, the 57-residue chain is Conotoxin Cal6.34 (57 aa).

An N-terminal signal peptide occupies residues M1 to A22. 3 disulfides stabilise this stretch: C26/C37, C29/C43, and C36/C54.

It belongs to the conotoxin O1 superfamily. In terms of tissue distribution, expressed by the venom duct.

It localises to the secreted. Its function is as follows. Probable neurotoxin. The protein is Conotoxin Cal6.34 of Californiconus californicus (California cone).